A 106-amino-acid polypeptide reads, in one-letter code: Cytochrome c2 (106 aa).

The heme c site is built by C19, C22, H23, and M84.

The protein belongs to the cytochrome c family. Binds 1 heme c group covalently per subunit.

In Rhodopila globiformis (Rhodopseudomonas globiformis), this protein is Cytochrome c2.